The sequence spans 388 residues: Alanine racemase 3 (388 aa).

K41 functions as the Proton acceptor; specific for D-alanine in the catalytic mechanism. K41 bears the N6-(pyridoxal phosphate)lysine mark. R135 serves as a coordination point for substrate. Catalysis depends on Y256, which acts as the Proton acceptor; specific for L-alanine. M304 is a substrate binding site.

Belongs to the alanine racemase family. Pyridoxal 5'-phosphate serves as cofactor.

It catalyses the reaction L-alanine = D-alanine. It functions in the pathway amino-acid biosynthesis; D-alanine biosynthesis; D-alanine from L-alanine: step 1/1. In terms of biological role, catalyzes the interconversion of L-alanine and D-alanine. May also act on other amino acids. This is Alanine racemase 3 (alr3) from Mesorhizobium japonicum (strain LMG 29417 / CECT 9101 / MAFF 303099) (Mesorhizobium loti (strain MAFF 303099)).